The chain runs to 300 residues: GTPase Era (300 aa).

The Era-type G domain maps to 7-175 (YCGFIAIVGR…EKFVRESLKE (169 aa)). The interval 15 to 22 (GRPNVGKS) is G1. Position 15–22 (15–22 (GRPNVGKS)) interacts with GTP. A G2 region spans residues 41-45 (QTTRH). The interval 62–65 (DTPG) is G3. GTP-binding positions include 62-66 (DTPGL) and 124-127 (NKVD). The segment at 124–127 (NKVD) is G4. A G5 region spans residues 154–156 (ISA). Positions 206–283 (MGEELPYSVT…HLELWVKVKA (78 aa)) constitute a KH type-2 domain.

It belongs to the TRAFAC class TrmE-Era-EngA-EngB-Septin-like GTPase superfamily. Era GTPase family. As to quaternary structure, monomer.

The protein resides in the cytoplasm. Its subcellular location is the cell inner membrane. Its function is as follows. An essential GTPase that binds both GDP and GTP, with rapid nucleotide exchange. Plays a role in 16S rRNA processing and 30S ribosomal subunit biogenesis and possibly also in cell cycle regulation and energy metabolism. This chain is GTPase Era, found in Glaesserella parasuis serovar 5 (strain SH0165) (Haemophilus parasuis).